Here is a 136-residue protein sequence, read N- to C-terminus: NADH-quinone oxidoreductase subunit A (136 aa).

Helical transmembrane passes span 20–40 (LAVYAVLVAAFVAVQLFVAWW), 70–90 (VPFYLVAIFFLIFDMEGAYIL), and 99–119 (LGWAGWLQMSFFIGLLLVGLV).

This sequence belongs to the complex I subunit 3 family. In terms of assembly, NDH-1 is composed of 14 different subunits. Subunits NuoA, H, J, K, L, M, N constitute the membrane sector of the complex.

The protein resides in the cell inner membrane. The catalysed reaction is a quinone + NADH + 5 H(+)(in) = a quinol + NAD(+) + 4 H(+)(out). Its function is as follows. NDH-1 shuttles electrons from NADH, via FMN and iron-sulfur (Fe-S) centers, to quinones in the respiratory chain. The immediate electron acceptor for the enzyme in this species is believed to be ubiquinone. Couples the redox reaction to proton translocation (for every two electrons transferred, four hydrogen ions are translocated across the cytoplasmic membrane), and thus conserves the redox energy in a proton gradient. The chain is NADH-quinone oxidoreductase subunit A from Syntrophobacter fumaroxidans (strain DSM 10017 / MPOB).